Here is a 135-residue protein sequence, read N- to C-terminus: MSSSNNSVVYWGTGRRKTSVARVRLVPGSGTITINGRPGDHYLNFNPAYLAAVKAPLQTLGLNEQYDVLVNVHGGGLTGQADAIKQGAARALCELSADNRKPLKTEGHLSRDPRAKERRKYGLKKARKAPQFSKR.

The segment at 96 to 135 (SADNRKPLKTEGHLSRDPRAKERRKYGLKKARKAPQFSKR) is disordered. The span at 97–115 (ADNRKPLKTEGHLSRDPRA) shows a compositional bias: basic and acidic residues. Residues 116–135 (KERRKYGLKKARKAPQFSKR) show a composition bias toward basic residues.

This sequence belongs to the universal ribosomal protein uS9 family.

The polypeptide is Small ribosomal subunit protein uS9 (Prochlorococcus marinus (strain MIT 9313)).